The following is a 418-amino-acid chain: D-amino acid dehydrogenase (418 aa).

3 to 17 serves as a coordination point for FAD; that stretch reads VLILGSGVVGVATAY.

It belongs to the DadA oxidoreductase family. Requires FAD as cofactor.

The catalysed reaction is a D-alpha-amino acid + A + H2O = a 2-oxocarboxylate + AH2 + NH4(+). It functions in the pathway amino-acid degradation; D-alanine degradation; NH(3) and pyruvate from D-alanine: step 1/1. Its function is as follows. Oxidative deamination of D-amino acids. The polypeptide is D-amino acid dehydrogenase (Granulibacter bethesdensis (strain ATCC BAA-1260 / CGDNIH1)).